Reading from the N-terminus, the 505-residue chain is Geissoschizine oxidase (505 aa).

A helical transmembrane segment spans residues 9–29 (FSSPAFFLLLPFLFLLIKPLI). Heme is bound at residue cysteine 443.

It belongs to the cytochrome P450 family. It depends on heme as a cofactor. In terms of tissue distribution, mainly expressed in roots.

It localises to the membrane. It catalyses the reaction (19E)-geissoschizine + reduced [NADPH--hemoprotein reductase] + O2 = akuammicine + formate + oxidized [NADPH--hemoprotein reductase] + H2O + H(+). The enzyme catalyses (19E)-geissoschizine + reduced [NADPH--hemoprotein reductase] + O2 = 3,17-didehydrostemmadenine + oxidized [NADPH--hemoprotein reductase] + 2 H2O. It carries out the reaction 3,17-didehydrostemmadenine = 17-dehydropreakuammicine. The protein operates within alkaloid biosynthesis. Its function is as follows. Monooxygenase involved in the biosynthesis of curare monoterpene indole alkaloids (MIAs), natural products such as strychnine, a neurotoxic compound used as a pesticide to control rodents, and its pharmacologically active derivatives, including brucine, used to regulate blood pressure. Curare alkaloids act as animal glycine receptor antagonists. Catalyzes the conversion of geissoschizine to dehydropreakuammicine by cyclization, which is spontaneously converted into akuammicine by aromatization. The protein is Geissoschizine oxidase of Strychnos nux-vomica (Poison nut).